We begin with the raw amino-acid sequence, 296 residues long: Ribosomal RNA small subunit methyltransferase A (296 aa).

Residues Asn28, Leu30, Gly55, Glu77, Asp103, and Asn122 each contribute to the S-adenosyl-L-methionine site.

It belongs to the class I-like SAM-binding methyltransferase superfamily. rRNA adenine N(6)-methyltransferase family. RsmA subfamily.

The protein localises to the cytoplasm. The catalysed reaction is adenosine(1518)/adenosine(1519) in 16S rRNA + 4 S-adenosyl-L-methionine = N(6)-dimethyladenosine(1518)/N(6)-dimethyladenosine(1519) in 16S rRNA + 4 S-adenosyl-L-homocysteine + 4 H(+). Specifically dimethylates two adjacent adenosines (A1518 and A1519) in the loop of a conserved hairpin near the 3'-end of 16S rRNA in the 30S particle. May play a critical role in biogenesis of 30S subunits. This chain is Ribosomal RNA small subunit methyltransferase A, found in Sinorhizobium fredii (strain NBRC 101917 / NGR234).